A 924-amino-acid chain; its full sequence is MPGPSPGLRRALLGLWAALGLGLFGLSAVSQEPFWADLQPRVAFVERGGSLWLNCSTNCPRPERGGLETSLRRNGTQRGLRWLARQLVDIREPETQPVCFFRCARRTLQARGLIRTFQRPDRVELMPLPPWQPVGENFTLSCRVPGAGPRASLTLTLLRGAQELIRRSFAGEPPRARGAVLTATVLARREDHGANFSCRAELDLRPHGLGLFENSSAPRELRTFSLSPDAPRLAAPRLLEVGSERPVSCTLDGLFPASEARVYLALGDQNLSPDVTLEGDAFVATATATASAEQEGARQLVCNVTLGGENRETRENVTIYSFPAPLLTLSEPSVSEGQMVTVTCAAGAQALVTLEGVPAAVPGQPAQLQLNATENDDRRSFFCDATLDVDGETLIKNRSAELRVLYAPRLDDSDCPRSWTWPEGPEQTLRCEARGNPEPSVHCARSDGGAVLALGLLGPVTRALSGTYRCKAANDQGEAVKDVTLTVEYAPALDSVGCPERITWLEGTEASLSCVAHGVPPPDVICVRSGELGAVIEGLLRVAREHAGTYRCEATNPRGSAAKNVAVTVEYGPRFEEPSCPSNWTWVEGSGRLFSCEVDGKPQPSVKCVGSGGATEGVLLPLAPPDPSPRAPRIPRVLAPGIYVCNATNRHGSVAKTVVVSAESPPEMDESTCPSHQTWLEGAEASALACAARGRPSPGVRCSREGIPWPEQQRVSREDAGTYHCVATNAHGTDSRTVTVGVEYRPVVAELAASPPGGVRPGGNFTLTCRAEAWPPAQISWRAPPGALNIGLSSNNSTLSVAGAMGSHGGEYECAATNAHGRHARRITVRVAGPWLWVAVGGAAGGAALLAAGAGLAFYVQSTACKKGEYNVQEAESSGEAVCLNGAGGGAGGAAGAEGGPEAAGGAAESPAEGEVFAIQLTSA.

The first 31 residues, 1–31, serve as a signal peptide directing secretion; the sequence is MPGPSPGLRRALLGLWAALGLGLFGLSAVSQ. Residues 32–835 lie on the Extracellular side of the membrane; it reads EPFWADLQPR…RITVRVAGPW (804 aa). Ig-like C2-type domains are found at residues 48 to 130, 135 to 235, 242 to 329, 337 to 402, 408 to 486, 491 to 568, 573 to 662, 666 to 739, and 746 to 830; these read GGSL…PLPP, GENF…RLAA, GSER…LLTL, GQMV…SAEL, PRLD…VTLT, PALD…VAVT, PRFE…VVSA, PEMD…RTVT, and PVVA…ITVR. An N-linked (GlcNAc...) (high mannose) asparagine glycan is attached at asparagine 54. Disulfide bonds link cysteine 55–cysteine 99 and cysteine 59–cysteine 103. N-linked (GlcNAc...) asparagine glycans are attached at residues asparagine 74 and asparagine 137. Residues cysteine 142 and cysteine 198 are joined by a disulfide bond. Residues threonine 182 and threonine 184 each carry the phosphothreonine modification. N-linked (GlcNAc...) asparagine glycans are attached at residues asparagine 195 and asparagine 214. Cysteines 249 and 302 form a disulfide. 4 N-linked (GlcNAc...) asparagine glycosylation sites follow: asparagine 303, asparagine 316, asparagine 371, and asparagine 397. Cysteine 344 and cysteine 383 are disulfide-bonded. 3 cysteine pairs are disulfide-bonded: cysteine 415-cysteine 470, cysteine 498-cysteine 552, and cysteine 580-cysteine 645. Asparagine 583 and asparagine 646 each carry an N-linked (GlcNAc...) asparagine glycan. The cysteines at positions 673 and 725 are disulfide-linked. Residues asparagine 764, asparagine 795, and asparagine 796 are each glycosylated (N-linked (GlcNAc...) asparagine). The cysteines at positions 769 and 814 are disulfide-linked. A helical membrane pass occupies residues 836 to 856; it reads LWVAVGGAAGGAALLAAGAGL. Residues 857 to 924 are Cytoplasmic-facing; it reads AFYVQSTACK…EVFAIQLTSA (68 aa). Residues 891 to 903 show a composition bias toward gly residues; that stretch reads AGGAAGAEGGPEA. The disordered stretch occupies residues 891-911; it reads AGGAAGAEGGPEAAGGAAESP.

Belongs to the immunoglobulin superfamily. ICAM family. Glycosylation at Asn-54 is critical for functional folding. In terms of tissue distribution, expressed on neurons in the most rostral segment of the mammalian brain, the telencephalon.

It localises to the membrane. Functionally, ICAM proteins are ligands for the leukocyte adhesion protein LFA-1 (integrin alpha-L/beta-2). This is Intercellular adhesion molecule 5 (ICAM5) from Homo sapiens (Human).